Consider the following 1297-residue polypeptide: Phosphoribosylformylglycinamidine synthase (1297 aa).

Residues 307-318 and Ala-678 each bind ATP; that span reads GASTGSGGEIRD. Positions 718, 722, and 886 each coordinate Mg(2+). The region spanning 1044–1297 is the Glutamine amidotransferase type-1 domain; sequence MAILREQGVN…MFQNARKYFG (254 aa). The Nucleophile role is filled by Cys-1137. Active-site residues include His-1262 and Glu-1264.

In the N-terminal section; belongs to the FGAMS family. Monomer.

It localises to the cytoplasm. The catalysed reaction is N(2)-formyl-N(1)-(5-phospho-beta-D-ribosyl)glycinamide + L-glutamine + ATP + H2O = 2-formamido-N(1)-(5-O-phospho-beta-D-ribosyl)acetamidine + L-glutamate + ADP + phosphate + H(+). The protein operates within purine metabolism; IMP biosynthesis via de novo pathway; 5-amino-1-(5-phospho-D-ribosyl)imidazole from N(2)-formyl-N(1)-(5-phospho-D-ribosyl)glycinamide: step 1/2. Phosphoribosylformylglycinamidine synthase involved in the purines biosynthetic pathway. Catalyzes the ATP-dependent conversion of formylglycinamide ribonucleotide (FGAR) and glutamine to yield formylglycinamidine ribonucleotide (FGAM) and glutamate. The chain is Phosphoribosylformylglycinamidine synthase from Vibrio cholerae serotype O1 (strain ATCC 39315 / El Tor Inaba N16961).